A 225-amino-acid polypeptide reads, in one-letter code: MVTHSKFPAAGMSRPLDTSLRLKTFSSKSEYQLVVNAVRKLQESGFYWSAVTGGEANLLLSAEPAGTFLIRDSSDQRHFFTLSVETQSGTKNLRIQCEGGSFSLQSDPRSTQPVPRFDCVLKLVHHYMPPPGAPSFSLPPTEPSFEVQEQPPAQALPGGTPKRAYYIYSGGEKIPLVLSRPLSSNVATLQHLCRKTVNGHLDSYEKVTQLPGPIREFLDQYDAPL.

The interval 22 to 33 (LKTFSSKSEYQL) is kinase inhibitory region (KIR). An extended SH2 subdomain (ESS) region spans residues 34–45 (VVNAVRKLQESG). In terms of domain architecture, SH2 spans 46–142 (FYWSAVTGGE…APSFSLPPTE (97 aa)). The tract at residues 141–160 (TEPSFEVQEQPPAQALPGGT) is disordered. Residues 177 to 224 (VLSRPLSSNVATLQHLCRKTVNGHLDSYEKVTQLPGPIREFLDQYDAP) form the SOCS box domain.

As to quaternary structure, interacts with multiple activated proteins of the tyrosine kinase signaling pathway including IGF1 receptor, insulin receptor and JAK2. Binding to JAK2 is mediated through the KIR and SH2 domains to a phosphorylated tyrosine residue within the JAK2 JH1 domain. Binds specific activated tyrosine residues of the leptin, EPO, IL12, GSCF and gp130 receptors. Interaction with CSNK1E stabilize SOCS3 protein. Component of the probable ECS(SOCS3) E3 ubiquitin-protein ligase complex which contains CUL5, RNF7/RBX2, Elongin BC complex and SOCS3. Interacts with CUL5, RNF7, ELOB and ELOC. Interacts with FGFR3. Interacts with INSR. Interacts with BCL10; this interaction may interfere with BCL10-binding with PELI2. Interacts with NOD2 (via CARD domain); the interaction promotes NOD2 degradation. Phosphorylated on tyrosine residues after stimulation by the cytokines, IL-2, EPO or IGF1.

It participates in protein modification; protein ubiquitination. Functionally, SOCS family proteins form part of a classical negative feedback system that regulates cytokine signal transduction. SOCS3 is involved in negative regulation of cytokines that signal through the JAK/STAT pathway. Inhibits cytokine signal transduction by binding to tyrosine kinase receptors including IL6ST/gp130, LIF, erythropoietin, insulin, IL12, GCSF and leptin receptors. Binding to JAK2 inhibits its kinase activity and regulates IL6 signaling. Suppresses fetal liver erythropoiesis. Regulates onset and maintenance of allergic responses mediated by T-helper type 2 cells. Probable substrate recognition component of a SCF-like ECS (Elongin BC-CUL2/5-SOCS-box protein) E3 ubiquitin-protein ligase complex which mediates the ubiquitination and subsequent proteasomal degradation of target proteins. The protein is Suppressor of cytokine signaling 3 of Rattus norvegicus (Rat).